We begin with the raw amino-acid sequence, 287 residues long: Bifunctional protein FolD (287 aa).

Residues Gly-166–Ser-168 and Ile-232 contribute to the NADP(+) site.

Belongs to the tetrahydrofolate dehydrogenase/cyclohydrolase family. As to quaternary structure, homodimer.

It catalyses the reaction (6R)-5,10-methylene-5,6,7,8-tetrahydrofolate + NADP(+) = (6R)-5,10-methenyltetrahydrofolate + NADPH. It carries out the reaction (6R)-5,10-methenyltetrahydrofolate + H2O = (6R)-10-formyltetrahydrofolate + H(+). It participates in one-carbon metabolism; tetrahydrofolate interconversion. Its function is as follows. Catalyzes the oxidation of 5,10-methylenetetrahydrofolate to 5,10-methenyltetrahydrofolate and then the hydrolysis of 5,10-methenyltetrahydrofolate to 10-formyltetrahydrofolate. This chain is Bifunctional protein FolD, found in Pectobacterium atrosepticum (strain SCRI 1043 / ATCC BAA-672) (Erwinia carotovora subsp. atroseptica).